Reading from the N-terminus, the 404-residue chain is Tryptophan synthase beta chain (404 aa).

The residue at position 94 (Lys94) is an N6-(pyridoxal phosphate)lysine.

Belongs to the TrpB family. In terms of assembly, tetramer of two alpha and two beta chains. The cofactor is pyridoxal 5'-phosphate.

The enzyme catalyses (1S,2R)-1-C-(indol-3-yl)glycerol 3-phosphate + L-serine = D-glyceraldehyde 3-phosphate + L-tryptophan + H2O. The protein operates within amino-acid biosynthesis; L-tryptophan biosynthesis; L-tryptophan from chorismate: step 5/5. Functionally, the beta subunit is responsible for the synthesis of L-tryptophan from indole and L-serine. The sequence is that of Tryptophan synthase beta chain from Staphylococcus aureus (strain MRSA252).